Reading from the N-terminus, the 465-residue chain is MKGIISQVMGPVVDVDFKDYLPKINEAIEVNFTVEGNTHKLILETAAHLGDNRVRTIAMDMSEGLTRGLDAIALGSPISVPVGEKVLGRIFNVIGDLIDEGEEEKFDKKWSIHRDPPAFEDQSTKSEIFETGIKVVDLLAPYAKGGKVGLFGGAGVGKTVIIMELIHNVAFKHSGYSVFAGVGERTREGNDLYNEMKESGVLDKVALCYGQMNEPPGARNRIALTGLTMAEYFRDEMGLDVLMFIDNIFRFSQSGSEMSALLGRIPSAVGYQPTLASEMGRLQERITSTKKGSITSVQAVYVPADDLTDPAPATVFAHLDATTVLNRAIAEKGIYPAVDPLDSTSRMLDPQILGEEHYKIARGVQAVLQKYKDLQDIIAILGMDELSEEDKLTVDRARKIEKYLSQPFFVAEVFTGSPGKYVSLEETIAGFKGILEGKYDQLPENAFYMVGNIDEAIAKAEKMRA.

152 to 159 is a binding site for ATP; that stretch reads GGAGVGKT.

It belongs to the ATPase alpha/beta chains family. F-type ATPases have 2 components, CF(1) - the catalytic core - and CF(0) - the membrane proton channel. CF(1) has five subunits: alpha(3), beta(3), gamma(1), delta(1), epsilon(1). CF(0) has three main subunits: a(1), b(2) and c(9-12). The alpha and beta chains form an alternating ring which encloses part of the gamma chain. CF(1) is attached to CF(0) by a central stalk formed by the gamma and epsilon chains, while a peripheral stalk is formed by the delta and b chains.

Its subcellular location is the cell inner membrane. It carries out the reaction ATP + H2O + 4 H(+)(in) = ADP + phosphate + 5 H(+)(out). In terms of biological role, produces ATP from ADP in the presence of a proton gradient across the membrane. The catalytic sites are hosted primarily by the beta subunits. This Campylobacter fetus subsp. fetus (strain 82-40) protein is ATP synthase subunit beta.